The chain runs to 323 residues: Mycothiol acetyltransferase (323 aa).

N-acetyltransferase domains follow at residues 5-145 (LTTD…LPLR) and 168-323 (VEIR…PEER). Glu36 provides a ligand contact to 1D-myo-inositol 2-(L-cysteinylamino)-2-deoxy-alpha-D-glucopyranoside. Residue 83 to 85 (VAV) participates in acetyl-CoA binding. Residues Glu195, Lys236, and Glu252 each coordinate 1D-myo-inositol 2-(L-cysteinylamino)-2-deoxy-alpha-D-glucopyranoside. Acetyl-CoA contacts are provided by residues 256–258 (VGV) and 263–269 (QGSGLGR). Tyr290 serves as a coordination point for 1D-myo-inositol 2-(L-cysteinylamino)-2-deoxy-alpha-D-glucopyranoside. 295-300 (NRPAVQ) contributes to the acetyl-CoA binding site.

It belongs to the acetyltransferase family. MshD subfamily. As to quaternary structure, monomer.

The enzyme catalyses 1D-myo-inositol 2-(L-cysteinylamino)-2-deoxy-alpha-D-glucopyranoside + acetyl-CoA = mycothiol + CoA + H(+). Its function is as follows. Catalyzes the transfer of acetyl from acetyl-CoA to desacetylmycothiol (Cys-GlcN-Ins) to form mycothiol. This Thermobifida fusca (strain YX) protein is Mycothiol acetyltransferase.